We begin with the raw amino-acid sequence, 293 residues long: Ribosomal protein L11 methyltransferase (293 aa).

Thr145, Gly166, Asp188, and Asn230 together coordinate S-adenosyl-L-methionine.

This sequence belongs to the methyltransferase superfamily. PrmA family.

It localises to the cytoplasm. The catalysed reaction is L-lysyl-[protein] + 3 S-adenosyl-L-methionine = N(6),N(6),N(6)-trimethyl-L-lysyl-[protein] + 3 S-adenosyl-L-homocysteine + 3 H(+). Functionally, methylates ribosomal protein L11. This is Ribosomal protein L11 methyltransferase from Shewanella piezotolerans (strain WP3 / JCM 13877).